We begin with the raw amino-acid sequence, 491 residues long: (S)-canadine synthase (491 aa).

A helical membrane pass occupies residues 6–26 (LLVCATVAIVFATTTIIRILF). Cysteine 434 serves as a coordination point for heme.

The protein belongs to the cytochrome P450 family. The cofactor is heme. As to expression, expressed at low levels in roots.

It is found in the endoplasmic reticulum membrane. Its subcellular location is the microsome membrane. It catalyses the reaction (S)-tetrahydrocolumbamine + reduced [NADPH--hemoprotein reductase] + O2 = (S)-canadine + oxidized [NADPH--hemoprotein reductase] + 2 H2O + H(+). Its function is as follows. Involved in the last but one step of the biosynthesis of berberine, an antimicrobial benzylisoquinoline alkaloid. Converts (S)-tetrahydrocolumbamine (THC) to (S)-tetrahydroberberine (THB) also called (S)-canadine. The chain is (S)-canadine synthase (CYP719A1) from Coptis japonica (Japanese goldthread).